Here is a 1071-residue protein sequence, read N- to C-terminus: ATP-dependent helicase/deoxyribonuclease subunit B (1071 aa).

This sequence belongs to the helicase family. AddB/RexB type 2 subfamily. As to quaternary structure, heterodimer of AddA and RexB. The cofactor is Mg(2+).

In terms of biological role, the heterodimer acts as both an ATP-dependent DNA helicase and an ATP-dependent, dual-direction single-stranded exonuclease. Recognizes the chi site generating a DNA molecule suitable for the initiation of homologous recombination. This subunit has 5' -&gt; 3' nuclease activity but not helicase activity. The polypeptide is ATP-dependent helicase/deoxyribonuclease subunit B (Streptococcus pyogenes serotype M4 (strain MGAS10750)).